Here is a 261-residue protein sequence, read N- to C-terminus: Aquaporin-8 (261 aa).

Residues 1–36 (MSGEQTPMCSMDLPEVKVKTSMAGRCRVFWYEQYVQ) lie on the Cytoplasmic side of the membrane. The helical transmembrane segment at 37–57 (PCIVELVGSALFIFIGCLSVI) threads the bilayer. Cysteine persulfide is present on Cys-53. Cys-53 carries the cysteine sulfenic acid (-SOH) modification. Topologically, residues 58–84 (ENSPNTGLLQPALAHGLALGLIIATLG) are extracellular. Residues 85-105 (NISGGHFNPAVSLAVTVIGGL) form a helical membrane-spanning segment. The NPA 1 signature appears at 92–94 (NPA). Topologically, residues 106 to 107 (KT) are cytoplasmic. Residues 108–128 (MLLIPYWISQLFGGLIGAALA) form a helical membrane-spanning segment. The Extracellular portion of the chain corresponds to 129 to 156 (KVVSPEERFWNASGAAFAIVQEQEQVAE). N-linked (GlcNAc...) asparagine glycosylation is present at Asn-139. Residues 157–177 (ALGIEIILTMLLVLAVCMGAV) traverse the membrane as a helical segment. Residues 178–183 (NEKTMG) lie on the Cytoplasmic side of the membrane. The chain crosses the membrane as a helical span at residues 184–204 (PLAPFSIGFSVIVDILAGGSI). Topologically, residues 205–228 (SGACMNPARAFGPAVMAGYWDFHW) are extracellular. The NPA 2 signature appears at 210–212 (NPA). The helical transmembrane segment at 229–249 (IYWLGPLLAGLFVGLLIRLLI) threads the bilayer. Topologically, residues 250 to 261 (GDEKTRLILKSR) are cytoplasmic.

This sequence belongs to the MIP/aquaporin (TC 1.A.8) family. Sulfenylation at Cys-53(C53-SOH) when hydrogen peroxide flows through the AQP8 channel, making it susceptible to hydrogen sulfide produced by CBS. In terms of processing, persulfidation at Cys-53 is required to gate AQP8 channel; under stress condition, hydrogen peroxide accumulates in the cell leading to CBS activation that produces hydrogen sulfide inducing persulfidation of oxidized Cys-53 (C53-SOH). Post-translationally, N-glycosylated. Expressed in placenta. Highly expressed in the epithelial layer of gall-bladders. Expressed in heart, kidney, submandibular gland, liver, small intestine, colon, testes, and epididymis. In testes, expressed in spermatogenic cells.

It localises to the cell membrane. The protein localises to the mitochondrion inner membrane. It is found in the apical cell membrane. Its subcellular location is the basolateral cell membrane. The protein resides in the smooth endoplasmic reticulum membrane. It carries out the reaction H2O(in) = H2O(out). The catalysed reaction is urea(in) = urea(out). It catalyses the reaction NH4(+)(in) = NH4(+)(out). The enzyme catalyses H2O2(out) = H2O2(in). It carries out the reaction formamide(out) = formamide(in). The catalysed reaction is methylamine(out) = methylamine(in). With respect to regulation, reversibly gated by a two-step sulfenylation-persulfidation process in cells undergoing diverse stresses. Channel that allows the facilitated permeation of water and uncharged molecules, such as hydrogen peroxide and the neutral form of ammonia (NH3), through cellular membranes such as plasma membrane, inner mitochondrial membrane and endoplasmic reticulum membrane of several tissues. The transport of ammonia neutral form induces a parallel transport of proton, at alkaline pH when the concentration of ammonia is high. However, it is unclear whether the transport of proton takes place via the aquaporin or via an endogenous pathway. Also, may transport ammonia analogs such as formamide and methylamine, a transport favourited at basic pH due to the increase of unprotonated (neutral) form, which is expected to favor diffusion. In vitro, may be also permeable to urea but not to glycerol. Does not transport urea or glycerol. The water transport mechanism is mercury- and copper-sensitive and passive in response to osmotic driving forces. At the canicular plasma membrane, mediates the osmotic transport of water toward the bile canaliculus and facilitates the cAMP-induced bile canalicular water secretion, a process involved in bile formation. In addition, mediates the hydrogen peroxide release from hepatocyte mitochondria that modulates the SREBF2-mediated cholesterol synthesis and facilitates the mitochondrial ammonia uptake which is metabolized into urea, mainly under glucagon stimulation. In B cells, transports the CYBB-generated hydrogen peroxide from the external leaflet of the plasma membrane to the cytosol to promote B cell activation and differentiation for signal amplification. In the small intestine and colon system, mediates water transport through mitochondria and apical membrane of epithelial cells. May play an important role in the adaptive response of proximal tubule cells to acidosis possibly facilitating mitochondrial ammonia transport. The protein is Aquaporin-8 of Mus musculus (Mouse).